The chain runs to 443 residues: Glutamate--tRNA ligase 1 (443 aa).

The 'HIGH' region motif lies at 8 to 18 (PSPTGRLHVGN). Residues 239 to 243 (KLSKR) carry the 'KMSKS' region motif. K242 serves as a coordination point for ATP.

This sequence belongs to the class-I aminoacyl-tRNA synthetase family. Glutamate--tRNA ligase type 1 subfamily. In terms of assembly, monomer.

It is found in the cytoplasm. It carries out the reaction tRNA(Glu) + L-glutamate + ATP = L-glutamyl-tRNA(Glu) + AMP + diphosphate. Its function is as follows. Catalyzes the attachment of glutamate to tRNA(Glu) in a two-step reaction: glutamate is first activated by ATP to form Glu-AMP and then transferred to the acceptor end of tRNA(Glu). The polypeptide is Glutamate--tRNA ligase 1 (Rhizorhabdus wittichii (strain DSM 6014 / CCUG 31198 / JCM 15750 / NBRC 105917 / EY 4224 / RW1) (Sphingomonas wittichii)).